The chain runs to 372 residues: tRNA-specific 2-thiouridylase MnmA (372 aa).

ATP is bound by residues 9–16 (GLSGGVDS) and methionine 35. The segment at 95 to 97 (NPD) is interaction with target base in tRNA. Cysteine 100 acts as the Nucleophile in catalysis. An intrachain disulfide couples cysteine 100 to cysteine 198. Glycine 124 is an ATP binding site. Positions 148–150 (KDQ) are interaction with tRNA. Cysteine 198 functions as the Cysteine persulfide intermediate in the catalytic mechanism. The segment at 317–318 (RY) is interaction with tRNA.

Belongs to the MnmA/TRMU family.

The protein localises to the cytoplasm. It carries out the reaction S-sulfanyl-L-cysteinyl-[protein] + uridine(34) in tRNA + AH2 + ATP = 2-thiouridine(34) in tRNA + L-cysteinyl-[protein] + A + AMP + diphosphate + H(+). Functionally, catalyzes the 2-thiolation of uridine at the wobble position (U34) of tRNA, leading to the formation of s(2)U34. The sequence is that of tRNA-specific 2-thiouridylase MnmA from Delftia acidovorans (strain DSM 14801 / SPH-1).